A 662-amino-acid polypeptide reads, in one-letter code: PAN2-PAN3 deadenylation complex subunit PAN3 (662 aa).

Disordered stretches follow at residues Met1–Asp29 and Asp53–Thr133. The C3H1-type zinc-finger motif lies at Asn26–His55. Low complexity predominate over residues Ser75–Ser102. Over residues Ser115 to Thr133 the composition is skewed to polar residues. The pseudokinase domain stretch occupies residues Gln263 to Ser525. ATP-binding positions include Arg315, Asp364–Thr371, and Ser425–Lys426. A coiled-coil region spans residues Ser526 to Phe564. Residues Val565–His662 are knob domain.

Belongs to the protein kinase superfamily. PAN3 family. In terms of assembly, homodimer. Forms a heterotrimer with a catalytic subunit pan2 to form the poly(A)-nuclease (PAN) deadenylation complex. Interacts (via PAM-2 motif) with poly(A)-binding protein pab1 (via PABC domain), conferring substrate specificity of the enzyme complex.

The protein resides in the cytoplasm. Functionally, regulatory subunit of the poly(A)-nuclease (PAN) deadenylation complex, one of two cytoplasmic mRNA deadenylases involved in mRNA turnover. PAN specifically shortens poly(A) tails of RNA and the activity is stimulated by poly(A)-binding protein pab1. PAN deadenylation is followed by rapid degradation of the shortened mRNA tails by the CCR4-NOT complex. Deadenylated mRNAs are then degraded by two alternative mechanisms, namely exosome-mediated 3'-5' exonucleolytic degradation, or deadenylation-dependent mRNA decaping and subsequent 5'-3' exonucleolytic degradation by xrn1. May also be involved in post-transcriptional maturation of mRNA poly(A) tails. pan3 acts as a positive regulator for PAN activity, recruiting the catalytic subunit pan2 to mRNA via its interaction with RNA and with pab1. The protein is PAN2-PAN3 deadenylation complex subunit PAN3 of Aspergillus fumigatus (strain ATCC MYA-4609 / CBS 101355 / FGSC A1100 / Af293) (Neosartorya fumigata).